The primary structure comprises 264 residues: tRNA pseudouridine synthase A (264 aa).

Aspartate 51 functions as the Nucleophile in the catalytic mechanism. Substrate is bound at residue tyrosine 109.

It belongs to the tRNA pseudouridine synthase TruA family. Homodimer.

The enzyme catalyses uridine(38/39/40) in tRNA = pseudouridine(38/39/40) in tRNA. In terms of biological role, formation of pseudouridine at positions 38, 39 and 40 in the anticodon stem and loop of transfer RNAs. This Staphylococcus aureus (strain MRSA252) protein is tRNA pseudouridine synthase A.